The following is a 739-amino-acid chain: UPF0313 protein YgiQ (739 aa).

Residues 372–650 (AYEMIRFSVN…KALLRYHDPA (279 aa)) enclose the Radical SAM core domain. [4Fe-4S] cluster-binding residues include Cys386, Cys390, and Cys393. The tract at residues 686–739 (EARRQNRNTRPALTKHTPMATQCQTPATAKKASSTQSRPVNAGAKKRPKAAVGR) is disordered. Positions 704–724 (MATQCQTPATAKKASSTQSRP) are enriched in polar residues. The segment covering 729–739 (AKKRPKAAVGR) has biased composition (basic residues).

Belongs to the UPF0313 family. [4Fe-4S] cluster is required as a cofactor.

The chain is UPF0313 protein YgiQ from Escherichia coli O157:H7.